The chain runs to 339 residues: Tryptophan--tRNA ligase (339 aa).

Residues 11 to 13 (QPT) and 19 to 20 (GN) each bind ATP. Positions 12–20 (PTGAIHIGN) match the 'HIGH' region motif. An L-tryptophan-binding site is contributed by aspartate 135. ATP contacts are provided by residues 147–149 (GED), isoleucine 191, and 200–204 (KMSKS). The 'KMSKS' region motif lies at 200–204 (KMSKS).

The protein belongs to the class-I aminoacyl-tRNA synthetase family. In terms of assembly, homodimer.

It is found in the cytoplasm. It catalyses the reaction tRNA(Trp) + L-tryptophan + ATP = L-tryptophyl-tRNA(Trp) + AMP + diphosphate + H(+). Functionally, catalyzes the attachment of tryptophan to tRNA(Trp). In Prochlorococcus marinus (strain SARG / CCMP1375 / SS120), this protein is Tryptophan--tRNA ligase.